The following is a 351-amino-acid chain: Heat-inducible transcription repressor HrcA (351 aa).

The protein belongs to the HrcA family.

Functionally, negative regulator of class I heat shock genes (grpE-dnaK-dnaJ and groELS operons). Prevents heat-shock induction of these operons. The chain is Heat-inducible transcription repressor HrcA from Beutenbergia cavernae (strain ATCC BAA-8 / DSM 12333 / CCUG 43141 / JCM 11478 / NBRC 16432 / NCIMB 13614 / HKI 0122).